The sequence spans 100 residues: Small ribosomal subunit protein uS14c (100 aa).

It belongs to the universal ribosomal protein uS14 family. As to quaternary structure, part of the 30S ribosomal subunit.

The protein resides in the plastid. The protein localises to the chloroplast. Its function is as follows. Binds 16S rRNA, required for the assembly of 30S particles. In Lotus japonicus (Lotus corniculatus var. japonicus), this protein is Small ribosomal subunit protein uS14c.